Consider the following 582-residue polypeptide: DNA mismatch repair protein MutL (582 aa).

The protein belongs to the DNA mismatch repair MutL/HexB family.

Its function is as follows. This protein is involved in the repair of mismatches in DNA. It is required for dam-dependent methyl-directed DNA mismatch repair. May act as a 'molecular matchmaker', a protein that promotes the formation of a stable complex between two or more DNA-binding proteins in an ATP-dependent manner without itself being part of a final effector complex. This is DNA mismatch repair protein MutL from Chlamydia abortus (strain DSM 27085 / S26/3) (Chlamydophila abortus).